A 218-amino-acid chain; its full sequence is Small ribosomal subunit protein uS3c (218 aa).

The region spanning 43-118 (IKNYVQKNMK…KLNISITRIE (76 aa)) is the KH type-2 domain.

Belongs to the universal ribosomal protein uS3 family. Part of the 30S ribosomal subunit.

Its subcellular location is the plastid. It is found in the chloroplast. The sequence is that of Small ribosomal subunit protein uS3c (rps3) from Populus trichocarpa (Western balsam poplar).